A 251-amino-acid chain; its full sequence is Aspartate/glutamate leucyltransferase (251 aa).

The protein belongs to the R-transferase family. Bpt subfamily.

The protein resides in the cytoplasm. It carries out the reaction N-terminal L-glutamyl-[protein] + L-leucyl-tRNA(Leu) = N-terminal L-leucyl-L-glutamyl-[protein] + tRNA(Leu) + H(+). It catalyses the reaction N-terminal L-aspartyl-[protein] + L-leucyl-tRNA(Leu) = N-terminal L-leucyl-L-aspartyl-[protein] + tRNA(Leu) + H(+). In terms of biological role, functions in the N-end rule pathway of protein degradation where it conjugates Leu from its aminoacyl-tRNA to the N-termini of proteins containing an N-terminal aspartate or glutamate. This chain is Aspartate/glutamate leucyltransferase, found in Nitrosospira multiformis (strain ATCC 25196 / NCIMB 11849 / C 71).